Reading from the N-terminus, the 553-residue chain is Zinc finger matrin-type protein 1 (553 aa).

The tract at residues 16 to 36 (TPSSPAATCSGPMAGGDTSSN) is disordered. 4 consecutive Matrin-type zinc fingers follow at residues 61-91 (TFCKVCNAVLQFESHRISHYEGKKHAQKVRL), 125-155 (KFCGLCNMVFSSPVVAQTHYVGKVHAKKMRQ), 223-253 (KYCKLCCASFNKALVAQQHYSGKKHARNQAR), and 275-305 (YVCPICNITLTSIEMYQSHMQGNKHQIKESM). Disordered stretches follow at residues 341-402 (QFRQ…DQRV) and 428-553 (HISR…ILGF). A compositionally biased stretch (acidic residues) spans 350–362 (DSCDYEEEEEQEP). Positions 431-453 (RSPTSQDSSDNSSGSSSDESSGS) are enriched in low complexity. Over residues 456–476 (KDKRRKRKHHRESRLRGSGRI) the composition is skewed to basic residues. Basic and acidic residues predominate over residues 477 to 513 (RRGDENSEKRKRKGEDADSGKEDNKHDRGKTSGGDKD).

It localises to the nucleus. In Xenopus tropicalis (Western clawed frog), this protein is Zinc finger matrin-type protein 1 (zmat1).